The primary structure comprises 400 residues: Enoyl-[acyl-carrier-protein] reductase [NADH] (400 aa).

NAD(+)-binding positions include 48-53, 74-75, 111-112, and 139-140; these read GSSSGY, FE, DA, and LA. Residue tyrosine 225 coordinates substrate. Tyrosine 235 (proton donor) is an active-site residue. NAD(+) contacts are provided by residues lysine 244 and 273-275; that span reads VVT.

This sequence belongs to the TER reductase family. In terms of assembly, monomer.

The enzyme catalyses a 2,3-saturated acyl-[ACP] + NAD(+) = a (2E)-enoyl-[ACP] + NADH + H(+). Its pathway is lipid metabolism; fatty acid biosynthesis. Its function is as follows. Involved in the final reduction of the elongation cycle of fatty acid synthesis (FAS II). Catalyzes the reduction of a carbon-carbon double bond in an enoyl moiety that is covalently linked to an acyl carrier protein (ACP). The chain is Enoyl-[acyl-carrier-protein] reductase [NADH] from Shewanella frigidimarina (strain NCIMB 400).